Here is a 78-residue protein sequence, read N- to C-terminus: Esculentin-2PLa (78 aa).

An N-terminal signal peptide occupies residues 1–22; it reads MFTTKKSMLLLFFLGTISLSLC. The propeptide occupies 23 to 39; the sequence is EEERGADEEEGDGEKLM. Cys-72 and Cys-78 form a disulfide bridge.

In terms of tissue distribution, expressed by the skin glands.

The protein localises to the secreted. Antimicrobial activity against the Gram-negative bacterium E.coli, the Gram-positive bacterium S.aureus and the yeast C.albicans. This is Esculentin-2PLa from Lithobates palustris (Pickerel frog).